We begin with the raw amino-acid sequence, 531 residues long: Peptide chain release factor 3 (531 aa).

Residues 13-282 (AKRRTFAIIS…TLIEHAPPPK (270 aa)) enclose the tr-type G domain. Residues 22-29 (SHPDAGKT), 90-94 (DTPGH), and 144-147 (NKLD) each bind GTP.

This sequence belongs to the TRAFAC class translation factor GTPase superfamily. Classic translation factor GTPase family. PrfC subfamily.

The protein resides in the cytoplasm. Functionally, increases the formation of ribosomal termination complexes and stimulates activities of RF-1 and RF-2. It binds guanine nucleotides and has strong preference for UGA stop codons. It may interact directly with the ribosome. The stimulation of RF-1 and RF-2 is significantly reduced by GTP and GDP, but not by GMP. This is Peptide chain release factor 3 from Psychrobacter sp. (strain PRwf-1).